The primary structure comprises 952 residues: Valine--tRNA ligase (952 aa).

Residues 45 to 55 (PNVTGSLHMGH) carry the 'HIGH' region motif. A 'KMSKS' region motif is present at residues 571 to 575 (KMSKS). Lysine 574 provides a ligand contact to ATP. Positions 894–950 (KEIAKADADIARVDLKLADQNFIANAPGEIVEDEKEKREAAAARKAKFVEALERLKA) form a coiled coil.

This sequence belongs to the class-I aminoacyl-tRNA synthetase family. ValS type 1 subfamily. Monomer.

It is found in the cytoplasm. The enzyme catalyses tRNA(Val) + L-valine + ATP = L-valyl-tRNA(Val) + AMP + diphosphate. Catalyzes the attachment of valine to tRNA(Val). As ValRS can inadvertently accommodate and process structurally similar amino acids such as threonine, to avoid such errors, it has a 'posttransfer' editing activity that hydrolyzes mischarged Thr-tRNA(Val) in a tRNA-dependent manner. The chain is Valine--tRNA ligase from Nitrobacter winogradskyi (strain ATCC 25391 / DSM 10237 / CIP 104748 / NCIMB 11846 / Nb-255).